Consider the following 503-residue polypeptide: Maturase K (503 aa).

It belongs to the intron maturase 2 family. MatK subfamily.

It localises to the plastid. The protein resides in the chloroplast. Its function is as follows. Usually encoded in the trnK tRNA gene intron. Probably assists in splicing its own and other chloroplast group II introns. The polypeptide is Maturase K (Diospyros virginiana (American persimmon)).